Consider the following 515-residue polypeptide: Maturase K (515 aa).

It belongs to the intron maturase 2 family. MatK subfamily.

It is found in the plastid. Its subcellular location is the chloroplast. Its function is as follows. Usually encoded in the trnK tRNA gene intron. Probably assists in splicing its own and other chloroplast group II introns. This Alpinia zerumbet (Shell ginger) protein is Maturase K.